Consider the following 77-residue polypeptide: MKRERGRRGRKRVCSFCVDKATSIDYKETSKLRKYVTERGKILPRRISGNCAHHQRMLTTAIKRSRNIALLPFSTEA.

It belongs to the bacterial ribosomal protein bS18 family. In terms of assembly, part of the 30S ribosomal subunit. Forms a tight heterodimer with protein bS6.

Functionally, binds as a heterodimer with protein bS6 to the central domain of the 16S rRNA, where it helps stabilize the platform of the 30S subunit. The polypeptide is Small ribosomal subunit protein bS18 (Desulforamulus reducens (strain ATCC BAA-1160 / DSM 100696 / MI-1) (Desulfotomaculum reducens)).